Reading from the N-terminus, the 530-residue chain is UDP-glucuronosyltransferase 2B17 (530 aa).

Residues 1 to 23 form the signal peptide; the sequence is MPGKWISALLLLQISCCFQSGNC. Residues 494-510 form a helical membrane-spanning segment; the sequence is VIGFLLTCSAVIAVLTV.

This sequence belongs to the UDP-glycosyltransferase family.

The protein resides in the endoplasmic reticulum membrane. The catalysed reaction is glucuronate acceptor + UDP-alpha-D-glucuronate = acceptor beta-D-glucuronoside + UDP + H(+). The enzyme catalyses 17alpha-estradiol + UDP-alpha-D-glucuronate = 17alpha-estradiol 3-O-(beta-D-glucuronate) + UDP + H(+). It carries out the reaction 17alpha-estradiol + UDP-alpha-D-glucuronate = 17alpha-estradiol 17-O-(beta-D-glucuronate) + UDP + H(+). It catalyses the reaction 17beta-estradiol + UDP-alpha-D-glucuronate = 17beta-estradiol 17-O-(beta-D-glucuronate) + UDP + H(+). The catalysed reaction is 17beta-hydroxy-5alpha-androstan-3-one + UDP-alpha-D-glucuronate = 5alpha-dihydrotestosterone 17-O-(beta-D-glucuronate) + UDP + H(+). The enzyme catalyses testosterone + UDP-alpha-D-glucuronate = testosterone 17-O-(beta-D-glucuronate) + UDP + H(+). In terms of biological role, UDP-glucuronosyltransferase (UGT) that catalyzes phase II biotransformation reactions in which lipophilic substrates are conjugated with glucuronic acid to increase the metabolite's water solubility, thereby facilitating excretion into either the urine or bile. Catalyzes the glucuronidation of endogenous steroid hormones such as androgens (epitestosterone, androsterone) and estrogens (estradiol, epiestradiol). In Rattus norvegicus (Rat), this protein is UDP-glucuronosyltransferase 2B17.